The chain runs to 874 residues: Probable inorganic carbon transporter subunit DabA (874 aa).

Residues C398, D400, H580, and C595 each coordinate Zn(2+).

It belongs to the inorganic carbon transporter (TC 9.A.2) DabA family. As to quaternary structure, forms a complex with DabB. The cofactor is Zn(2+).

The protein resides in the cell membrane. In terms of biological role, part of an energy-coupled inorganic carbon pump. The protein is Probable inorganic carbon transporter subunit DabA of Bacillus thuringiensis subsp. konkukian (strain 97-27).